A 421-amino-acid chain; its full sequence is Serine hydroxymethyltransferase (421 aa).

Residues Leu-121 and 125 to 127 (GHL) contribute to the (6S)-5,6,7,8-tetrahydrofolate site. An N6-(pyridoxal phosphate)lysine modification is found at Lys-229.

The protein belongs to the SHMT family. As to quaternary structure, homodimer. The cofactor is pyridoxal 5'-phosphate.

The protein localises to the cytoplasm. The enzyme catalyses (6R)-5,10-methylene-5,6,7,8-tetrahydrofolate + glycine + H2O = (6S)-5,6,7,8-tetrahydrofolate + L-serine. It participates in one-carbon metabolism; tetrahydrofolate interconversion. Its pathway is amino-acid biosynthesis; glycine biosynthesis; glycine from L-serine: step 1/1. Catalyzes the reversible interconversion of serine and glycine with tetrahydrofolate (THF) serving as the one-carbon carrier. This reaction serves as the major source of one-carbon groups required for the biosynthesis of purines, thymidylate, methionine, and other important biomolecules. Also exhibits THF-independent aldolase activity toward beta-hydroxyamino acids, producing glycine and aldehydes, via a retro-aldol mechanism. This chain is Serine hydroxymethyltransferase, found in Haemophilus influenzae (strain ATCC 51907 / DSM 11121 / KW20 / Rd).